The primary structure comprises 410 residues: Elongation factor Tu, chloroplastic (410 aa).

The 205-residue stretch at 10-214 folds into the tr-type G domain; sequence KPHVNIGTIG…QVDAYIPTPE (205 aa). The tract at residues 19–26 is G1; sequence GHVDHGKT. Residue 19–26 participates in GTP binding; sequence GHVDHGKT. T26 serves as a coordination point for Mg(2+). The G2 stretch occupies residues 60–64; the sequence is GITIN. The G3 stretch occupies residues 81–84; it reads DCPG. Residues 81 to 85 and 136 to 139 each bind GTP; these read DCPGH and NKED. Residues 136 to 139 are G4; that stretch reads NKED. The interval 174 to 176 is G5; it reads SAL.

It belongs to the TRAFAC class translation factor GTPase superfamily. Classic translation factor GTPase family. EF-Tu/EF-1A subfamily.

It localises to the plastid. The protein localises to the chloroplast. It carries out the reaction GTP + H2O = GDP + phosphate + H(+). Functionally, GTP hydrolase that promotes the GTP-dependent binding of aminoacyl-tRNA to the A-site of ribosomes during protein biosynthesis. This Chlorokybus atmophyticus (Soil alga) protein is Elongation factor Tu, chloroplastic (tufA).